A 402-amino-acid chain; its full sequence is MNITGIITEYNPFHLGHELHLKNSKEITNCDGVICVMSGNFVQRGLPALTDKWTRTKMALEAGVDLVVELPTLFATSSAEFFAFGAVSLLNSLNVVNNICFGSECGDIDLIKKLSEIIVNEPPIFKEYLKDYLKEGLPFPKARSEALMKYLDYNNYKTDFSYLEKVLNSSNNILAIEYCKSLYKLQSTIKPFTIQRLGADYNDEELSKNEIASASAIRKSIYTSNIEESLDFMPEYSYNLLKNTSFSDLDKMFDLVKYAIVSNPNILKEIPEASEGIDNKIIQNIGKANSLDELINLCKSKRYSYTRLNRILCHILLNVNKDLLSLRKYSPNYVRILGFNNKGREILKEIKKNSEINIVNKLSKAKTDPLLEFDIKATNIYSFLNPSVKINSDYLISPIIFR.

ATP-binding positions include isoleucine 7 to histidine 20, glycine 102, asparagine 171, and arginine 196.

This sequence belongs to the TmcAL family.

It localises to the cytoplasm. It carries out the reaction cytidine(34) in elongator tRNA(Met) + acetate + ATP = N(4)-acetylcytidine(34) in elongator tRNA(Met) + AMP + diphosphate. Catalyzes the formation of N(4)-acetylcytidine (ac(4)C) at the wobble position of elongator tRNA(Met), using acetate and ATP as substrates. First activates an acetate ion to form acetyladenylate (Ac-AMP) and then transfers the acetyl group to tRNA to form ac(4)C34. The protein is tRNA(Met) cytidine acetate ligase of Clostridium perfringens (strain SM101 / Type A).